A 475-amino-acid polypeptide reads, in one-letter code: Ribulose bisphosphate carboxylase large chain (475 aa).

A propeptide spanning residues 1 to 2 (MS) is cleaved from the precursor. Proline 3 carries the N-acetylproline modification. N6,N6,N6-trimethyllysine is present on lysine 14. The substrate site is built by asparagine 123 and threonine 173. The active-site Proton acceptor is lysine 175. Lysine 177 is a substrate binding site. Mg(2+)-binding residues include lysine 201, aspartate 203, and glutamate 204. At lysine 201 the chain carries N6-carboxylysine. Histidine 294 serves as the catalytic Proton acceptor. Residues arginine 295, histidine 327, and serine 379 each coordinate substrate.

Belongs to the RuBisCO large chain family. Type I subfamily. In terms of assembly, heterohexadecamer of 8 large chains and 8 small chains; disulfide-linked. The disulfide link is formed within the large subunit homodimers. The cofactor is Mg(2+). The disulfide bond which can form in the large chain dimeric partners within the hexadecamer appears to be associated with oxidative stress and protein turnover.

Its subcellular location is the plastid. The protein resides in the chloroplast. The catalysed reaction is 2 (2R)-3-phosphoglycerate + 2 H(+) = D-ribulose 1,5-bisphosphate + CO2 + H2O. It carries out the reaction D-ribulose 1,5-bisphosphate + O2 = 2-phosphoglycolate + (2R)-3-phosphoglycerate + 2 H(+). RuBisCO catalyzes two reactions: the carboxylation of D-ribulose 1,5-bisphosphate, the primary event in carbon dioxide fixation, as well as the oxidative fragmentation of the pentose substrate in the photorespiration process. Both reactions occur simultaneously and in competition at the same active site. In Pinus thunbergii (Japanese black pine), this protein is Ribulose bisphosphate carboxylase large chain.